A 366-amino-acid chain; its full sequence is MSLTRKRGFYKQDINKTAWELPKTYLAPAHVGSGAYGAVCSAIDKRTGEKVAIKKLSRPFQSEIFAKRAYRELLLLKHMHHENVIGLLDVFTPASSLRSFHDFYLVMPFMQTDLQKIMGMEFSEDKVQYLVYQMLKGLKYIHSAGIVHRDLKPGNLAVNEDCELKILDFGLARHTDTEMTGYVVTRWYRAPEVILSWMHYNQTVDIWSVGCIMAEMLTGKTLFKGKDYLDQLTQILKVTGVPGAEFVQKLKDKAAKSYIQSLPQSPKKDFTQLFPRASPQAADLLDKMLELDVDKRLTAAQALAHPFFEPFRDPEEETEAQQPFDDALEHEKLSVDEWKQHIYKEISNFSPIARKDSRRRSGMKLQ.

The region spanning 25-308 (YLAPAHVGSG…AAQALAHPFF (284 aa)) is the Protein kinase domain. ATP-binding positions include 31–39 (VGSGAYGAV) and K54. The Proton acceptor role is filled by D150. Position 180 is a phosphothreonine; by MAP2K3, MAP2K4, MAP2K6 and MAP2K7 (T180). The short motif at 180–182 (TGY) is the TXY element. Y182 carries the post-translational modification Phosphotyrosine. The residue at position 350 (S350) is a Phosphoserine.

It belongs to the protein kinase superfamily. CMGC Ser/Thr protein kinase family. MAP kinase subfamily. Interacts with MAPK8IP2. It depends on Mg(2+) as a cofactor. Post-translationally, dually phosphorylated on Thr-180 and Tyr-182 by MAP2K3/MKK3, MAP2K4/MKK4, MAP2K6/MKK6 and MAP2K7/MKK7, which activates the enzyme. Dephosphorylated by dual specificity phosphatase DUSP1.

The enzyme catalyses L-seryl-[protein] + ATP = O-phospho-L-seryl-[protein] + ADP + H(+). It catalyses the reaction L-threonyl-[protein] + ATP = O-phospho-L-threonyl-[protein] + ADP + H(+). With respect to regulation, activated by phosphorylation on threonine and tyrosine by dual specificity kinases, MAP2K3/MKK3, MAP2K6/MKK6, MAP2K4/MKK4 and MAP2K7/MKK7. Activation by ultraviolet radiation, hyperosmotic shock, anisomycin or by TNF-alpha is mediated by MAP2K3/MKK3. Inhibited by dual specificity phosphatase DUSP1. Serine/threonine kinase which acts as an essential component of the MAP kinase signal transduction pathway. MAPK13 is one of the four p38 MAPKs which play an important role in the cascades of cellular responses evoked by extracellular stimuli such as pro-inflammatory cytokines or physical stress leading to direct activation of transcription factors such as ELK1 and ATF2. Accordingly, p38 MAPKs phosphorylate a broad range of proteins and it has been estimated that they may have approximately 200 to 300 substrates each. MAPK13 is one of the less studied p38 MAPK isoforms. Some of the targets are downstream kinases such as MAPKAPK2, which are activated through phosphorylation and further phosphorylate additional targets. Plays a role in the regulation of protein translation by phosphorylating and inactivating EEF2K. Involved in cytoskeletal remodeling through phosphorylation of MAPT and STMN1. Mediates UV irradiation induced up-regulation of the gene expression of CXCL14. Plays an important role in the regulation of epidermal keratinocyte differentiation, apoptosis and skin tumor development. Phosphorylates the transcriptional activator MYB in response to stress which leads to rapid MYB degradation via a proteasome-dependent pathway. MAPK13 also phosphorylates and down-regulates PRKD1 during regulation of insulin secretion in pancreatic beta cells. This Mus musculus (Mouse) protein is Mitogen-activated protein kinase 13 (Mapk13).